Consider the following 65-residue polypeptide: GVRDAYIADDKNCVYTCASNGYCNTECTKNGAESGYCQWIGRYGNACWCIKLPDEVPIRIPGKCR.

The LCN-type CS-alpha/beta domain maps to 3-65 (RDAYIADDKN…VPIRIPGKCR (63 aa)). The Important for toxin selectivity for individual Nav channel subtype (Nav1.6/SCN8A and Nav1.7/SCN9A), but not for toxin potency signature appears at 9–11 (DDK). Cystine bridges form between C13–C64, C17–C37, C23–C47, and C27–C49. Position 65 is an arginine amide (R65).

This sequence belongs to the long (4 C-C) scorpion toxin superfamily. Sodium channel inhibitor family. Alpha subfamily. Expressed by the venom gland.

It localises to the secreted. Functionally, alpha toxins bind voltage-independently at site-3 of sodium channels and inhibit the inactivation of the activated channels. The toxin affect mammalian sodium channels Nav1.7/SCN9A (EC(50)=4.5 nM), Nav1.4/SCN4A (EC(50)=9.6 nM), Nav1.6/SCN8A (EC(50)=30 nM), Nav1.5/SCN5A (only at micromolar concentrations), and insect sodium channel para/tipE (EC(50)=80 nM). In vivo, intraplantar administration of this toxin elicits pain behaviors, including licking and flinching of the hind paw. In Odontobuthus doriae (Yellow Iranian scorpion), this protein is Alpha-toxin OD1.